We begin with the raw amino-acid sequence, 589 residues long: uncharacterized protein (589 aa).

This is an uncharacterized protein from Bacillus anthracis.